The sequence spans 199 residues: MKLTKVALFSLGLFGFSSMALAHGDHMHNHDTKMDTMSKDMMSMEKIVVPVQQLDPQNGNKDVGTVEITESAYGLVFTPKLHDLAHGLHGFHIHEKPSCEPKEKDGKLVAGLGAGGHWDPKQTQKHGYPWSDDAHMGDLPALFVMHDGSATTPVLAPRLKKLAEVKGHSLMIHAGGDNHSDHPAPLGGGGPRMACGVIK.

A signal peptide spans 1 to 22 (MKLTKVALFSLGLFGFSSMALA). Cu cation is bound by residues His-92, His-94, and His-117. Cys-99 and Cys-195 are disulfide-bonded. Positions 117, 126, 135, and 138 each coordinate Zn(2+). Residue His-173 coordinates Cu cation.

The protein belongs to the Cu-Zn superoxide dismutase family. In terms of assembly, homodimer. It depends on Cu cation as a cofactor. Zn(2+) is required as a cofactor.

The protein localises to the periplasm. It carries out the reaction 2 superoxide + 2 H(+) = H2O2 + O2. Functionally, destroys radicals which are normally produced within the cells and which are toxic to biological systems. May play a role in the interactive biology of organisms with their hosts and so contribute to their capacity to cause disease. This Haemophilus ducreyi (strain 35000HP / ATCC 700724) protein is Superoxide dismutase [Cu-Zn] (sodC).